Reading from the N-terminus, the 344-residue chain is 3-isopropylmalate dehydrogenase (344 aa).

Positions 93, 103, 131, and 215 each coordinate substrate. 3 residues coordinate Mg(2+): Asp215, Asp239, and Asp243. 273–285 provides a ligand contact to NAD(+); sequence GSAPDIAGKGIAN.

The protein belongs to the isocitrate and isopropylmalate dehydrogenases family. LeuB type 1 subfamily. Homodimer. Mg(2+) serves as cofactor. The cofactor is Mn(2+).

The protein resides in the cytoplasm. The enzyme catalyses (2R,3S)-3-isopropylmalate + NAD(+) = 4-methyl-2-oxopentanoate + CO2 + NADH. It participates in amino-acid biosynthesis; L-leucine biosynthesis; L-leucine from 3-methyl-2-oxobutanoate: step 3/4. In terms of biological role, catalyzes the oxidation of 3-carboxy-2-hydroxy-4-methylpentanoate (3-isopropylmalate) to 3-carboxy-4-methyl-2-oxopentanoate. The product decarboxylates to 4-methyl-2 oxopentanoate. This chain is 3-isopropylmalate dehydrogenase, found in Streptococcus mutans serotype c (strain ATCC 700610 / UA159).